Here is a 362-residue protein sequence, read N- to C-terminus: Bifunctional chorismate mutase/prephenate dehydratase (362 aa).

The Chorismate mutase domain maps to 3 to 91 (QTIDELLIPH…ECLAVERPLT (89 aa)). The substrate site is built by Arg13, Arg30, Lys41, and Glu52. A Prephenate dehydratase domain is found at 92 to 269 (IAYLGPQGTF…NTTRFLVMGH (178 aa)). Residues 281 to 356 (SLAVSAPNRA…RASFVKAIGS (76 aa)) enclose the ACT domain.

The protein localises to the cytoplasm. It carries out the reaction chorismate = prephenate. The enzyme catalyses prephenate + H(+) = 3-phenylpyruvate + CO2 + H2O. Its pathway is amino-acid biosynthesis; L-phenylalanine biosynthesis; phenylpyruvate from prephenate: step 1/1. The protein operates within metabolic intermediate biosynthesis; prephenate biosynthesis; prephenate from chorismate: step 1/1. Catalyzes the Claisen rearrangement of chorismate to prephenate and the decarboxylation/dehydration of prephenate to phenylpyruvate. The protein is Bifunctional chorismate mutase/prephenate dehydratase (pheA) of Neisseria gonorrhoeae (strain ATCC 700825 / FA 1090).